The chain runs to 312 residues: Protein-methionine-sulfoxide reductase catalytic subunit MsrP (312 aa).

Positions 1–47 form a signal peptide, tat-type signal; sequence MLIRRPPDLLPSEITPEPLARGRRALLKGLGAGAALAGLGLPQISQA. Mo-molybdopterin is bound by residues Asn74, 77–78, Cys133, Thr168, Asn216, Arg221, and 232–234; these read YE and SAK.

Belongs to the MsrP family. In terms of assembly, heterodimer of a catalytic subunit (MsrP) and a heme-binding subunit (MsrQ). Mo-molybdopterin serves as cofactor. Post-translationally, predicted to be exported by the Tat system. The position of the signal peptide cleavage has not been experimentally proven.

Its subcellular location is the periplasm. It catalyses the reaction L-methionyl-[protein] + a quinone + H2O = L-methionyl-(R)-S-oxide-[protein] + a quinol. Its function is as follows. Part of the MsrPQ system that repairs oxidized periplasmic proteins containing methionine sulfoxide residues (Met-O), using respiratory chain electrons. Thus protects these proteins from oxidative-stress damage caused by reactive species of oxygen and chlorine generated by the host defense mechanisms. MsrPQ is essential for the maintenance of envelope integrity under bleach stress, rescuing a wide series of structurally unrelated periplasmic proteins from methionine oxidation. The catalytic subunit MsrP is non-stereospecific, being able to reduce both (R-) and (S-) diastereoisomers of methionine sulfoxide. Involved in protection against reactive chlorine species (RCS) generated by chlorite and hypochlorite. The chain is Protein-methionine-sulfoxide reductase catalytic subunit MsrP from Azospira oryzae (strain ATCC BAA-33 / DSM 13638 / PS) (Dechlorosoma suillum).